A 464-amino-acid chain; its full sequence is Alpha-amylase (464 aa).

The N-terminal stretch at 1–21 (MKNTAGILAIAGMLIAPLAHA) is a signal peptide. Residues H107 and R213 each contribute to the substrate site. D215 serves as the catalytic Nucleophile. 218–219 (KH) is a substrate binding site. Residue E242 is the Proton donor of the active site. Substrate is bound by residues G247 and H313.

The protein belongs to the glycosyl hydrolase 13 family.

The protein resides in the secreted. The catalysed reaction is Endohydrolysis of (1-&gt;4)-alpha-D-glucosidic linkages in polysaccharides containing three or more (1-&gt;4)-alpha-linked D-glucose units.. This Aeromonas hydrophila protein is Alpha-amylase.